Reading from the N-terminus, the 1372-residue chain is DNA-directed RNA polymerase subunit beta' (1372 aa).

C69, C71, C84, and C87 together coordinate Zn(2+). The Mg(2+) site is built by D460, D462, and D464. 4 residues coordinate Zn(2+): C808, C882, C889, and C892.

The protein belongs to the RNA polymerase beta' chain family. As to quaternary structure, the RNAP catalytic core consists of 2 alpha, 1 beta, 1 beta' and 1 omega subunit. When a sigma factor is associated with the core the holoenzyme is formed, which can initiate transcription. Mg(2+) is required as a cofactor. Requires Zn(2+) as cofactor.

It carries out the reaction RNA(n) + a ribonucleoside 5'-triphosphate = RNA(n+1) + diphosphate. Its function is as follows. DNA-dependent RNA polymerase catalyzes the transcription of DNA into RNA using the four ribonucleoside triphosphates as substrates. The chain is DNA-directed RNA polymerase subunit beta' from Rickettsia rickettsii (strain Iowa).